The chain runs to 226 residues: 7-cyano-7-deazaguanine synthase (226 aa).

8–18 (LSGGLDSTTTL) is a binding site for ATP. Zn(2+) contacts are provided by C188, C198, C201, and C204.

This sequence belongs to the QueC family. Requires Zn(2+) as cofactor.

The enzyme catalyses 7-carboxy-7-deazaguanine + NH4(+) + ATP = 7-cyano-7-deazaguanine + ADP + phosphate + H2O + H(+). It participates in purine metabolism; 7-cyano-7-deazaguanine biosynthesis. In terms of biological role, catalyzes the ATP-dependent conversion of 7-carboxy-7-deazaguanine (CDG) to 7-cyano-7-deazaguanine (preQ(0)). The polypeptide is 7-cyano-7-deazaguanine synthase (Nitrosomonas eutropha (strain DSM 101675 / C91 / Nm57)).